We begin with the raw amino-acid sequence, 239 residues long: Leucine rich adaptor protein 1 (239 aa).

2 LRR repeats span residues L55–L83 and L93–L114. Residues L107–S118 are compositionally biased toward low complexity. Residues L107 to D140 are disordered. 3 positions are modified to phosphoserine: S118, S126, and S129.

Forms a tripartite complex with CDC42BPA/CDC42BPB and MYO18A acting as an adapter connecting both. Its binding to CDC42BPA/CDC42BPB results in their activation by abolition of their negative autoregulation. Interacts with CDC42BPA and CDC42BPB. Phosphorylated.

The protein resides in the cytoplasm. Its function is as follows. Acts as an activator of the canonical NF-kappa-B pathway and drive the production of pro-inflammatory cytokines. Promotes the antigen (Ag)-presenting and priming function of dendritic cells via the canonical NF-kappa-B pathway. In concert with MYO18A and CDC42BPA/CDC42BPB, is involved in modulating lamellar actomyosin retrograde flow that is crucial to cell protrusion and migration. Activates CDC42BPA/CDC42BPB and targets it to actomyosin through its interaction with MYO18A, leading to MYL9/MLC2 phosphorylation and MYH9/MYH10-dependent actomyosin assembly in the lamella. This is Leucine rich adaptor protein 1 (Lurap1) from Rattus norvegicus (Rat).